Reading from the N-terminus, the 35-residue chain is U1-theraphotoxin-Hhn1a (35 aa).

Intrachain disulfides connect cysteine 2–cysteine 16, cysteine 9–cysteine 21, and cysteine 15–cysteine 28.

This sequence belongs to the neurotoxin 10 (Hwtx-1) family. 24 (Hwtx-6) subfamily. As to expression, expressed by the venom gland.

It is found in the secreted. In terms of biological role, gating-modifier toxin that dose-dependently inhibits inactivation of voltage-gated sodium channels and reduces the peak of sodium current in cockroach DUM neurons. In vivo, reversibly paralyzes cockroaches for several hours, paralyzes rat after intracerebroventricular injection and blocks the neuromuscular transmission of the isolated rat phrenic nerve-diaphragm preparation. The polypeptide is U1-theraphotoxin-Hhn1a (Cyriopagopus hainanus (Chinese bird spider)).